Consider the following 125-residue polypeptide: Inner membrane protein YbjM (125 aa).

The Cytoplasmic portion of the chain corresponds to 1–6; it reads MKHKQR. Residues 7 to 27 form a helical membrane-spanning segment; sequence WAGAICCFVLFIVVCLFLATH. The Periplasmic segment spans residues 28–34; sequence MKGAFRA. A helical membrane pass occupies residues 35–55; it reads AGHPEIGLLFFILPGAVASFF. The Cytoplasmic portion of the chain corresponds to 56 to 64; the sequence is SQRREVLKP. The helical transmembrane segment at 65 to 85 threads the bilayer; the sequence is LFGAMLAAPCSMLIMRLFFSP. The Periplasmic portion of the chain corresponds to 86–92; the sequence is TRSFWQE. The chain crosses the membrane as a helical span at residues 93–113; sequence LAWLLSAVFWCALGALCFLFI. At 114-125 the chain is on the cytoplasmic side; it reads SSLFKPQHRKNQ.

It localises to the cell inner membrane. The sequence is that of Inner membrane protein YbjM (ybjM) from Escherichia coli O157:H7.